We begin with the raw amino-acid sequence, 293 residues long: Pyridoxal 5'-phosphate synthase subunit PdxS (293 aa).

Aspartate 25 contacts D-ribose 5-phosphate. Lysine 82 functions as the Schiff-base intermediate with D-ribose 5-phosphate in the catalytic mechanism. Position 103 (aspartate 103) interacts with D-ribulose 5-phosphate. D-ribose 5-phosphate is bound at residue glycine 154. D-glyceraldehyde 3-phosphate is bound at residue arginine 166. Residues glycine 215 and 236 to 237 (GS) each bind D-ribose 5-phosphate.

This sequence belongs to the PdxS/SNZ family. In terms of assembly, homohexamer and homododecamer. In the presence of PdxT, forms a dodecamer of heterodimers.

It catalyses the reaction aldehydo-D-ribose 5-phosphate + D-glyceraldehyde 3-phosphate + L-glutamine = pyridoxal 5'-phosphate + L-glutamate + phosphate + 3 H2O + H(+). It participates in cofactor biosynthesis; pyridoxal 5'-phosphate biosynthesis. Its function is as follows. Catalyzes the formation of pyridoxal 5'-phosphate from ribose 5-phosphate (RBP), glyceraldehyde 3-phosphate (G3P) and ammonia. The ammonia is provided by the PdxT subunit. Can also use ribulose 5-phosphate and dihydroxyacetone phosphate as substrates, resulting from enzyme-catalyzed isomerization of RBP and G3P, respectively. This is Pyridoxal 5'-phosphate synthase subunit PdxS from Thermotoga maritima (strain ATCC 43589 / DSM 3109 / JCM 10099 / NBRC 100826 / MSB8).